The following is a 246-amino-acid chain: Uridylate kinase (246 aa).

Residue 19 to 22 (KISG) participates in ATP binding. Glycine 61 provides a ligand contact to UMP. Residues glycine 62 and arginine 66 each contribute to the ATP site. UMP-binding positions include aspartate 81 and 142-149 (TGNPFFTT). ATP is bound by residues threonine 169, glutamine 170, tyrosine 175, and aspartate 178.

It belongs to the UMP kinase family. In terms of assembly, homohexamer.

Its subcellular location is the cytoplasm. It carries out the reaction UMP + ATP = UDP + ADP. It participates in pyrimidine metabolism; CTP biosynthesis via de novo pathway; UDP from UMP (UMPK route): step 1/1. With respect to regulation, inhibited by UTP. Catalyzes the reversible phosphorylation of UMP to UDP. The protein is Uridylate kinase of Wolbachia sp. subsp. Brugia malayi (strain TRS).